We begin with the raw amino-acid sequence, 273 residues long: Beta-lactamase OXA-133 (273 aa).

A signal peptide spans 1-17 (MNKYFTCYVVASLFFSG). C18 carries N-palmitoyl cysteine lipidation. C18 carries the S-diacylglycerol cysteine lipid modification. S79 functions as the Acyl-ester intermediate in the catalytic mechanism. At K82 the chain carries N6-carboxylysine. Substrate is bound at residue 216–218 (KTG).

This sequence belongs to the class-D beta-lactamase family.

Its subcellular location is the cell membrane. It carries out the reaction a beta-lactam + H2O = a substituted beta-amino acid. Its function is as follows. Catalyzes the hydrolysis of beta-lactam antibiotics. This chain is Beta-lactamase OXA-133, found in Acinetobacter radioresistens.